Reading from the N-terminus, the 245-residue chain is Orotidine 5'-phosphate decarboxylase (245 aa).

Substrate-binding positions include aspartate 22, lysine 44, 71-80 (DLKFHDIPNT), threonine 131, arginine 192, glutamine 201, glycine 221, and arginine 222. The Proton donor role is filled by lysine 73.

This sequence belongs to the OMP decarboxylase family. Type 1 subfamily. As to quaternary structure, homodimer.

The enzyme catalyses orotidine 5'-phosphate + H(+) = UMP + CO2. Its pathway is pyrimidine metabolism; UMP biosynthesis via de novo pathway; UMP from orotate: step 2/2. In terms of biological role, catalyzes the decarboxylation of orotidine 5'-monophosphate (OMP) to uridine 5'-monophosphate (UMP). This is Orotidine 5'-phosphate decarboxylase from Salmonella choleraesuis (strain SC-B67).